The chain runs to 147 residues: Gastrula-specific protein 17 (147 aa).

Residues 1–119 (MSQNLDFLAL…TQVYGNHQPG (119 aa)) form a disordered region. 3 stretches are compositionally biased toward polar residues: residues 20-36 (SPTS…STPP), 45-57 (RQIS…YTNP), and 74-88 (LLQN…SPTA).

The polypeptide is Gastrula-specific protein 17 (gs17) (Xenopus laevis (African clawed frog)).